The primary structure comprises 151 residues: Ubiquitin-conjugating enzyme E2-17 kDa (151 aa).

A UBC core domain is found at 4-150 (PARRRLMRDF…VKACVEQSFI (147 aa)). Cysteine 88 serves as the catalytic Glycyl thioester intermediate.

This sequence belongs to the ubiquitin-conjugating enzyme family.

The protein resides in the nucleus. The enzyme catalyses S-ubiquitinyl-[E1 ubiquitin-activating enzyme]-L-cysteine + [E2 ubiquitin-conjugating enzyme]-L-cysteine = [E1 ubiquitin-activating enzyme]-L-cysteine + S-ubiquitinyl-[E2 ubiquitin-conjugating enzyme]-L-cysteine.. It functions in the pathway protein modification; protein ubiquitination. Its function is as follows. E2 ubiquitin-conjugating enzyme that accepts ubiquitin from the ubiquitin-activating enzyme E1 and transfers it to a E3 ubiquitin-protein ligase. Required for postreplication repair of UV-damaged DNA. Involved in the negative regulation of the Ras/MAPK signaling pathway in the wing by acting with the putative E3 ligases poe, Kcmf1 and Ufd4 to mediate the ubiquitination and proteasomal degradation of rl/MAPK. Required for in mitophagy. The chain is Ubiquitin-conjugating enzyme E2-17 kDa from Drosophila melanogaster (Fruit fly).